Consider the following 186-residue polypeptide: MLDQTNYTPRLKAAYANTVRAAMKEEFGYKNDMQIPRLDKIVLNMGVGEAVKDTKKVKTAAEELSMIAGQKAVVTHAKKSIAGFRVREQMPLGCKVTLRGDRMYEFLDRLITIALPRVRDFRGVKGNSFDGRGNYAMGLKEQFVFPEINFDKVDEVLGMDIIICTTAKTDAEAKALLKQFNMPFIS.

It belongs to the universal ribosomal protein uL5 family. In terms of assembly, part of the 50S ribosomal subunit; part of the 5S rRNA/L5/L18/L25 subcomplex. Contacts the 5S rRNA and the P site tRNA. Forms a bridge to the 30S subunit in the 70S ribosome.

In terms of biological role, this is one of the proteins that bind and probably mediate the attachment of the 5S RNA into the large ribosomal subunit, where it forms part of the central protuberance. In the 70S ribosome it contacts protein S13 of the 30S subunit (bridge B1b), connecting the 2 subunits; this bridge is implicated in subunit movement. Contacts the P site tRNA; the 5S rRNA and some of its associated proteins might help stabilize positioning of ribosome-bound tRNAs. The chain is Large ribosomal subunit protein uL5 from Cereibacter sphaeroides (strain ATCC 17029 / ATH 2.4.9) (Rhodobacter sphaeroides).